Here is a 106-residue protein sequence, read N- to C-terminus: Large ribosomal subunit protein bL21 (106 aa).

The protein belongs to the bacterial ribosomal protein bL21 family. In terms of assembly, part of the 50S ribosomal subunit. Contacts protein L20.

Functionally, this protein binds to 23S rRNA in the presence of protein L20. The chain is Large ribosomal subunit protein bL21 from Xanthomonas oryzae pv. oryzae (strain MAFF 311018).